An 88-amino-acid polypeptide reads, in one-letter code: HssA/B-like protein 11 (88 aa).

Belongs to the hssA/B family.

This is HssA/B-like protein 11 (hssl11) from Dictyostelium discoideum (Social amoeba).